Consider the following 366-residue polypeptide: tRNA/tmRNA (uracil-C(5))-methyltransferase (366 aa).

Residues glutamine 190, tyrosine 218, asparagine 223, glutamate 239, and aspartate 299 each contribute to the S-adenosyl-L-methionine site. Catalysis depends on cysteine 324, which acts as the Nucleophile. Glutamate 358 acts as the Proton acceptor in catalysis.

This sequence belongs to the class I-like SAM-binding methyltransferase superfamily. RNA M5U methyltransferase family. TrmA subfamily.

It catalyses the reaction uridine(54) in tRNA + S-adenosyl-L-methionine = 5-methyluridine(54) in tRNA + S-adenosyl-L-homocysteine + H(+). The enzyme catalyses uridine(341) in tmRNA + S-adenosyl-L-methionine = 5-methyluridine(341) in tmRNA + S-adenosyl-L-homocysteine + H(+). Its function is as follows. Dual-specificity methyltransferase that catalyzes the formation of 5-methyluridine at position 54 (m5U54) in all tRNAs, and that of position 341 (m5U341) in tmRNA (transfer-mRNA). The sequence is that of tRNA/tmRNA (uracil-C(5))-methyltransferase from Salmonella paratyphi C (strain RKS4594).